A 558-amino-acid polypeptide reads, in one-letter code: Ubiquitin carboxyl-terminal hydrolase 30 homolog (558 aa).

The helical transmembrane segment at 6 to 26 (ILMAAGVTVAAVVGAFVFWGP) threads the bilayer. A USP domain is found at 39–550 (AGLHNFGLTC…PAYLLFYDRG (512 aa)). C48 acts as the Nucleophile in catalysis. The disordered stretch occupies residues 267–300 (LATPMLGGERSSRPRLPQSQQQQDEGLNRRVSSS). A compositionally biased stretch (low complexity) spans 280–289 (PRLPQSQQQQ). The active-site Proton acceptor is the H506.

Belongs to the peptidase C19 family.

The protein localises to the mitochondrion outer membrane. The catalysed reaction is Thiol-dependent hydrolysis of ester, thioester, amide, peptide and isopeptide bonds formed by the C-terminal Gly of ubiquitin (a 76-residue protein attached to proteins as an intracellular targeting signal).. In terms of biological role, deubiquitinating enzyme that acts as a key inhibitor of mitophagy by counteracting the action of parkin (park). The chain is Ubiquitin carboxyl-terminal hydrolase 30 homolog from Drosophila melanogaster (Fruit fly).